Reading from the N-terminus, the 414-residue chain is Phthiocerol/phthiodiolone dimycocerosyl transferase (414 aa).

The Proton acceptor role is filled by histidine 118.

The protein belongs to the acyltransferase PapA5 family. As to quaternary structure, monomer. Interacts directly with the acyl carrier protein (ACP) domain of the mycocerosic acid synthase (mas) protein.

It carries out the reaction 2 a mycocerosyl-[mycocerosic acid synthase] + a phthiocerol = a dimycocerosyl phthiocerol + 2 holo-[mycocerosic acid synthase].. It catalyses the reaction 2 a mycocerosyl-[mycocerosic acid synthase] + a phthiodiolone = a dimycocerosyl phthiodiolone + 2 holo-[mycocerosic acid synthase].. The catalysed reaction is 2 a mycocerosyl-[mycocerosic acid synthase] + a phenolphthiocerol = a dimycocerosyl phenolphthiocerol + 2 holo-[mycocerosic acid synthase].. Functionally, catalyzes diesterification of phthiocerol, phthiodiolone, and phenolphthiocerol with mycocerosic acids, the final step in the phthiocerol, phthiodiolone and phenolphthiocerol dimycocerosate esters (PDIM) synthesis. Can directly transfer the mycocerosate bound to the mycocerosic acid synthase (mas) onto the substrate alcohols. The protein is Phthiocerol/phthiodiolone dimycocerosyl transferase (papA5) of Mycobacterium ulcerans (strain Agy99).